We begin with the raw amino-acid sequence, 720 residues long: Pro-neuregulin-3, membrane-bound isoform (720 aa).

Topologically, residues 1–360 (MSEGAAAASP…MESEEVYQRQ (360 aa)) are extracellular. Disordered stretches follow at residues 28 to 48 (AAAA…AAEP), 119 to 223 (SSFP…AMPS), and 246 to 280 (PFQD…TTYS). A compositionally biased stretch (gly residues) spans 34–44 (AGGGPDGGGEG). Low complexity predominate over residues 127-148 (TTTTTTSTTSPATPSAGGAASS). Over residues 149–163 (RTPNRISTRLTTITR) the composition is skewed to polar residues. Low complexity-rich tracts occupy residues 187–205 (TAAP…SSST) and 250–271 (AASS…TSTS). The EGF-like domain occupies 286–329 (HFKPCRDKDLAYCLNDGECFVIETLTGSHKHCRCKEGYQGVRCD). Intrachain disulfides connect cysteine 290/cysteine 304, cysteine 298/cysteine 317, and cysteine 319/cysteine 328. A helical transmembrane segment spans residues 361-381 (VLSISCIIFGIVIVGMFCAAF). Residues 382-720 (YFKSKKQAKQ…EIQRDSALTK (339 aa)) are Cytoplasmic-facing. Residues 451–481 (PQSFPEVPSPDRGSQSVKHHRSLSSCCSPGQ) form a disordered region.

This sequence belongs to the neuregulin family. Interacts with ERBB4. Proteolytic cleavage close to the plasma membrane on the external face leads to the release of the soluble growth factor form. Post-translationally, extensive glycosylation precedes the proteolytic cleavage. Isoform 3 is glycosylated. In terms of tissue distribution, highly expressed in most regions of the brain with the exception of corpus callosum. Expressed at lower level in testis. Not detected in heart, placenta, lung, liver, skeletal muscle, kidney, pancreas, spleen, thymus, prostate, ovary, small intestine, colon and peripheral blood leukocytes.

The protein localises to the cell membrane. It is found in the secreted. In terms of biological role, direct ligand for the ERBB4 tyrosine kinase receptor. Binding results in ligand-stimulated tyrosine phosphorylation and activation of the receptor. Does not bind to the EGF receptor, ERBB2 or ERBB3 receptors. May be a survival factor for oligodendrocytes. The polypeptide is Pro-neuregulin-3, membrane-bound isoform (NRG3) (Homo sapiens (Human)).